The following is a 282-amino-acid chain: Large ribosomal subunit protein uL2 (282 aa).

The disordered stretch occupies residues 215-282; the sequence is RHKGIRPTVR…IIRSRKETKK (68 aa). Positions 263 to 282 are enriched in basic residues; the sequence is RNPKKPSTKLIIRSRKETKK.

Belongs to the universal ribosomal protein uL2 family. In terms of assembly, part of the 50S ribosomal subunit. Forms a bridge to the 30S subunit in the 70S ribosome.

In terms of biological role, one of the primary rRNA binding proteins. Required for association of the 30S and 50S subunits to form the 70S ribosome, for tRNA binding and peptide bond formation. It has been suggested to have peptidyltransferase activity; this is somewhat controversial. Makes several contacts with the 16S rRNA in the 70S ribosome. This is Large ribosomal subunit protein uL2 from Mesomycoplasma hyopneumoniae (strain J / ATCC 25934 / NCTC 10110) (Mycoplasma hyopneumoniae).